The sequence spans 279 residues: Putative expansin-A26 (279 aa).

An N-terminal signal peptide occupies residues 1 to 27; the sequence is MKLLEKMIYVEFLMIIMAMWVVPMSYG. Residues 76-186 enclose the Expansin-like EG45 domain; sequence QGACGYGNLF…RRIPCSKTGG (111 aa). An Expansin-like CBD domain is found at 196 to 275; that stretch reads YFLMVLIYNV…NWGFGQTFDG (80 aa).

It belongs to the expansin family. Expansin A subfamily.

Its subcellular location is the secreted. It is found in the cell wall. It localises to the membrane. Causes loosening and extension of plant cell walls by disrupting non-covalent bonding between cellulose microfibrils and matrix glucans. No enzymatic activity has been found. This chain is Putative expansin-A26 (EXPA26), found in Arabidopsis thaliana (Mouse-ear cress).